A 259-amino-acid chain; its full sequence is MADRSGHLAALILLGAAVCVAQPRGRILGGQEAKSHERPYMASVQVNGKHVCGGFLVSEQWVLSAAHCLEDVAEGKLQVLLGAHSLSQPEPSKRLYDVLRAVPHPDSQPDTIDHDLLLLKLSEKAELGPAVQPLAWQREDHEVPAGTLCDVAGWGVVSHTGRRPDRLQHLLLPVLDRTTCNLRTYHDGTITERMMCAESNRRDSCKGDSGGPLVCGGVAEGVVTSGSRVCGNRKKPGIYTRLASYVAWIDGVMADSAAA.

The signal sequence occupies residues 1–21 (MADRSGHLAALILLGAAVCVA). Residues 22–26 (QPRGR) constitute a propeptide, activation peptide. Positions 27-254 (ILGGQEAKSH…YVAWIDGVMA (228 aa)) constitute a Peptidase S1 domain. Residues cysteine 52 and cysteine 68 are joined by a disulfide bond. Residues histidine 67 and aspartate 115 each act as charge relay system in the active site. 3 cysteine pairs are disulfide-bonded: cysteine 149–cysteine 215, cysteine 180–cysteine 196, and cysteine 205–cysteine 230. The Charge relay system role is filled by serine 209. The segment at 224 to 228 (TSGSR) is self-inhibitor loop.

The protein belongs to the peptidase S1 family. Post-translationally, CFD is activated by the removal of 5 residues at the N-terminus, named activation peptide, by the MASP-3 isoform of MASP1.

It is found in the secreted. The catalysed reaction is Selective cleavage of Arg-|-Lys bond in complement factor B when in complex with complement subcomponent C3b or with cobra venom factor.. Its activity is regulated as follows. Circulates in plasma in a mature but self-inhibited form. Activated by factor B (CFB), which displaces the self-inhibition loop. Associates with CFB complexed with complement C3b. In terms of biological role, serine protease that initiates the alternative pathway of the complement system, a cascade of proteins that leads to phagocytosis and breakdown of pathogens and signaling that strengthens the adaptive immune system. In contrast to other complement pathways (classical, lectin and GZMK) that are directly activated by pathogens or antigen-antibody complexes, the alternative complement pathway is initiated by the spontaneous hydrolysis of complement C3. The alternative complement pathway acts as an amplification loop that enhances complement activation by mediating the formation of C3 and C5 convertases. Activated CFD cleaves factor B (CFB) when the latter is complexed with complement C3b, activating the C3 convertase of the alternative pathway. The polypeptide is Complement factor D (CFD) (Sus scrofa (Pig)).